We begin with the raw amino-acid sequence, 172 residues long: Large ribosomal subunit protein uL10 (172 aa).

It belongs to the universal ribosomal protein uL10 family. As to quaternary structure, part of the ribosomal stalk of the 50S ribosomal subunit. The N-terminus interacts with L11 and the large rRNA to form the base of the stalk. The C-terminus forms an elongated spine to which L12 dimers bind in a sequential fashion forming a multimeric L10(L12)X complex.

Forms part of the ribosomal stalk, playing a central role in the interaction of the ribosome with GTP-bound translation factors. The protein is Large ribosomal subunit protein uL10 of Prosthecochloris aestuarii (strain DSM 271 / SK 413).